The primary structure comprises 183 residues: Capsid protein (183 aa).

The tract at residues 143–183 is disordered; it reads LPENAVVRRRGRSPRRRTPSPRRRRSQSPRRRRSQSRGSQC. The span at 149–177 shows a compositional bias: basic residues; that stretch reads VRRRGRSPRRRTPSPRRRRSQSPRRRRSQ. Phosphoserine; by host occurs at positions 155, 162, and 170. A 1; half-length repeat occupies 155-161; sequence SPRRRTP. The 3 X 8 AA repeats of S-P-R-R-R-[PR]-S-Q stretch occupies residues 155 to 177; the sequence is SPRRRTPSPRRRRSQSPRRRRSQ. A Bipartite nuclear localization signal motif is present at residues 158-175; that stretch reads RRTPSPRRRRSQSPRRRR. 2 consecutive repeat copies span residues 162 to 169 and 170 to 177. The tract at residues 177–183 is RNA binding; the sequence is QSRGSQC.

This sequence belongs to the orthohepadnavirus core antigen family. Homodimerizes, then multimerizes. Interacts with cytosol exposed regions of viral L glycoprotein present in the reticulum-to-Golgi compartment. Interacts with human FLNB. Phosphorylated form interacts with host importin alpha; this interaction depends on the exposure of the NLS, which itself depends upon genome maturation and/or phosphorylation of the capsid protein. Interacts with host NUP153. Phosphorylated by host SRPK1, SRPK2, and maybe protein kinase C or GAPDH. Phosphorylation is critical for pregenomic RNA packaging. Protein kinase C phosphorylation is stimulated by HBx protein and may play a role in transport of the viral genome to the nucleus at the late step during the viral replication cycle.

Its subcellular location is the virion. The protein resides in the host cytoplasm. Functionally, self assembles to form an icosahedral capsid. Most capsids appear to be large particles with an icosahedral symmetry of T=4 and consist of 240 copies of capsid protein, though a fraction forms smaller T=3 particles consisting of 180 capsid proteins. Entering capsids are transported along microtubules to the nucleus. Phosphorylation of the capsid is thought to induce exposure of nuclear localization signal in the C-terminal portion of the capsid protein that allows binding to the nuclear pore complex via the importin (karyopherin-) alpha and beta. Capsids are imported in intact form through the nuclear pore into the nuclear basket, where it probably binds NUP153. Only capsids that contain the mature viral genome can release the viral DNA and capsid protein into the nucleoplasm. Immature capsids get stuck in the basket. Capsids encapsulate the pre-genomic RNA and the P protein. Pre-genomic RNA is reverse-transcribed into DNA while the capsid is still in the cytoplasm. The capsid can then either be directed to the nucleus, providing more genomes for transcription, or bud through the endoplasmic reticulum to provide new virions. The polypeptide is Capsid protein (Homo sapiens (Human)).